We begin with the raw amino-acid sequence, 248 residues long: Probable transcriptional regulatory protein OCAR_7305/OCA5_c08120 (248 aa).

It belongs to the TACO1 family.

Its subcellular location is the cytoplasm. The protein is Probable transcriptional regulatory protein OCAR_7305/OCA5_c08120 of Afipia carboxidovorans (strain ATCC 49405 / DSM 1227 / KCTC 32145 / OM5) (Oligotropha carboxidovorans).